Consider the following 420-residue polypeptide: Phosphoglycerate kinase (420 aa).

Residues valine 24, aspartate 25, phenylalanine 26, asparagine 27, arginine 40, serine 63, histidine 64, glycine 66, arginine 67, leucine 122, arginine 123, histidine 170, and arginine 171 each contribute to the (2R)-3-phosphoglycerate site. Glycine 214 lines the ADP pocket. A CDP-binding site is contributed by glycine 214. Residues alanine 215 and lysine 216 each contribute to the AMP site. Alanine 215 contributes to the ATP binding site. Position 215 (alanine 215) interacts with Mg(2+). Aspartate 219 lines the CDP pocket. Aspartate 219 is a binding site for Mg(2+). Lysine 220 provides a ligand contact to AMP. Lysine 220 contributes to the ATP binding site. Glycine 238 lines the ADP pocket. Glycine 238 serves as a coordination point for CDP. Residues glycine 239 and glycine 313 each coordinate AMP. Residues glycine 239 and glycine 313 each coordinate ATP. CDP contacts are provided by glycine 338 and phenylalanine 343. ADP is bound at residue phenylalanine 343. Glutamate 344 serves as a coordination point for AMP. Glutamate 344, aspartate 375, and threonine 376 together coordinate ATP. Aspartate 375 is a Mg(2+) binding site.

It belongs to the phosphoglycerate kinase family. Monomer. Requires Mg(2+) as cofactor.

The catalysed reaction is (2R)-3-phosphoglycerate + ATP = (2R)-3-phospho-glyceroyl phosphate + ADP. It functions in the pathway carbohydrate degradation; glycolysis; pyruvate from D-glyceraldehyde 3-phosphate: step 2/5. In Tetrahymena thermophila, this protein is Phosphoglycerate kinase (PGK).